The sequence spans 130 residues: Small ribosomal subunit protein uS9 (130 aa).

This sequence belongs to the universal ribosomal protein uS9 family.

This Stenotrophomonas maltophilia (strain R551-3) protein is Small ribosomal subunit protein uS9.